A 291-amino-acid chain; its full sequence is MGSAEQACGCKGARFCALCETTERVKKLRVVEDKHVNYKVFIYDHIRQIAIPTTNLNSQSSLEDIIDESTSCQSVSTDGSIEIDGLTLIHNFLSESEESKILNMIDTVEWAQSQSGRRKQDYGPKVNFKHKKVKTDTFVGMPEYADMLLNKMSEYDVKKLGNYQPFEMCNLEYEEVKKSAIEMHQDDMWIWGNRLISINLINGSVMTLSNDNKSFLCYVHMPHRSLLCMADECRYDWKHGVLAHHIRGRRIALTMREAAKDFAEGGELYEKYGAELIRLGNIRVPLSKTSV.

In terms of domain architecture, Fe2OG dioxygenase spans 85 to 256; that stretch reads GLTLIHNFLS…RGRRIALTMR (172 aa). 171–173 is a binding site for 2-oxoglutarate; sequence LEY. Fe cation is bound by residues His184, Asp186, and His239.

This sequence belongs to the alkB family. In terms of assembly, interacts with top-2; the interaction is required for localization of top-2 to DNA. Also interacts with mtss-1, his-24, ule-3, C18B2.3, pgl-1, ceh-93, mcm-4 and F37C4.5. Requires Fe(2+) as cofactor.

Its subcellular location is the nucleus. The enzyme catalyses an N(6)-methyl-2'-deoxyadenosine in DNA + 2-oxoglutarate + O2 = a 2'-deoxyadenosine in DNA + formaldehyde + succinate + CO2. Dioxygenase that specifically demethylates DNA methylated on the 6th position of adenine (N(6)-methyladenosine) DNA. N(6)-methyladenosine (m6A) DNA is involved in epigenetic transgenerational inheritance. Plays an essential role in DNA replication and repair in the germline during meiosis. Binds to components of the DNA replication machinery such as top-2, and directs their localization to DNA to control DNA replication. The chain is DNA N6-methyl adenine demethylase from Caenorhabditis elegans.